Reading from the N-terminus, the 448-residue chain is Adenylosuccinate synthetase (448 aa).

GTP is bound by residues 22 to 28 (GDEGKGK) and 50 to 52 (GHT). Aspartate 23 serves as the catalytic Proton acceptor. Residues aspartate 23 and glycine 50 each contribute to the Mg(2+) site. IMP-binding positions include 23 to 26 (DEGK), 48 to 51 (NAGH), threonine 139, arginine 153, glutamine 234, threonine 249, and arginine 321. Histidine 51 serves as the catalytic Proton donor. 317 to 323 (SVTGRPR) provides a ligand contact to substrate. GTP is bound by residues arginine 323, 349-351 (KLD), and 431-433 (STG).

The protein belongs to the adenylosuccinate synthetase family. Homodimer. Mg(2+) serves as cofactor.

It localises to the cytoplasm. It catalyses the reaction IMP + L-aspartate + GTP = N(6)-(1,2-dicarboxyethyl)-AMP + GDP + phosphate + 2 H(+). It functions in the pathway purine metabolism; AMP biosynthesis via de novo pathway; AMP from IMP: step 1/2. Functionally, plays an important role in the de novo pathway of purine nucleotide biosynthesis. Catalyzes the first committed step in the biosynthesis of AMP from IMP. The polypeptide is Adenylosuccinate synthetase (Paraburkholderia phytofirmans (strain DSM 17436 / LMG 22146 / PsJN) (Burkholderia phytofirmans)).